Consider the following 292-residue polypeptide: [LysW]-aminoadipate kinase (292 aa).

The substrate site is built by Arg89 and Asn193.

The protein belongs to the acetylglutamate kinase family. LysZ subfamily.

It is found in the cytoplasm. It carries out the reaction [amino-group carrier protein]-C-terminal-N-(1,4-dicarboxybutan-1-yl)-L-glutamine + ATP = [amino-group carrier protein]-C-terminal-N-(1-carboxy-5-phosphooxy-5-oxopentan-1-yl)-L-glutamine + ADP. The protein operates within amino-acid biosynthesis; L-lysine biosynthesis via AAA pathway; L-lysine from L-alpha-aminoadipate (Thermus route): step 2/5. In terms of biological role, catalyzes the phosphorylation of LysW-gamma-alpha-aminoadipate. This Deinococcus radiodurans (strain ATCC 13939 / DSM 20539 / JCM 16871 / CCUG 27074 / LMG 4051 / NBRC 15346 / NCIMB 9279 / VKM B-1422 / R1) protein is [LysW]-aminoadipate kinase.